The sequence spans 346 residues: Glycerol-3-phosphate dehydrogenase [NAD(P)+] (346 aa).

4 residues coordinate NADPH: Ser-15, Trp-16, Arg-36, and Lys-110. The sn-glycerol 3-phosphate site is built by Lys-110, Gly-139, and Ser-141. Ala-143 contacts NADPH. Positions 194, 247, 257, 258, and 259 each coordinate sn-glycerol 3-phosphate. The active-site Proton acceptor is the Lys-194. Residue Arg-258 coordinates NADPH. The NADPH site is built by Val-282 and Glu-284.

Belongs to the NAD-dependent glycerol-3-phosphate dehydrogenase family.

The protein resides in the cytoplasm. The enzyme catalyses sn-glycerol 3-phosphate + NAD(+) = dihydroxyacetone phosphate + NADH + H(+). It carries out the reaction sn-glycerol 3-phosphate + NADP(+) = dihydroxyacetone phosphate + NADPH + H(+). It functions in the pathway membrane lipid metabolism; glycerophospholipid metabolism. In terms of biological role, catalyzes the reduction of the glycolytic intermediate dihydroxyacetone phosphate (DHAP) to sn-glycerol 3-phosphate (G3P), the key precursor for phospholipid synthesis. The sequence is that of Glycerol-3-phosphate dehydrogenase [NAD(P)+] from Xylella fastidiosa (strain M23).